The following is a 39-amino-acid chain: Photosystem II reaction center protein J (39 aa).

A helical membrane pass occupies residues Leu-9–Tyr-29.

It belongs to the PsbJ family. As to quaternary structure, PSII is composed of 1 copy each of membrane proteins PsbA, PsbB, PsbC, PsbD, PsbE, PsbF, PsbH, PsbI, PsbJ, PsbK, PsbL, PsbM, PsbT, PsbY, PsbZ, Psb30/Ycf12, at least 3 peripheral proteins of the oxygen-evolving complex and a large number of cofactors. It forms dimeric complexes.

It is found in the plastid. The protein localises to the chloroplast thylakoid membrane. Functionally, one of the components of the core complex of photosystem II (PSII). PSII is a light-driven water:plastoquinone oxidoreductase that uses light energy to abstract electrons from H(2)O, generating O(2) and a proton gradient subsequently used for ATP formation. It consists of a core antenna complex that captures photons, and an electron transfer chain that converts photonic excitation into a charge separation. The chain is Photosystem II reaction center protein J from Cyanidium caldarium (Red alga).